Here is a 361-residue protein sequence, read N- to C-terminus: Putative F-box protein At1g33010 (361 aa).

In terms of domain architecture, F-box spans 4–50 (GNTLDSIPTDLILEIFSRLSAKSVGRLRCLSKLWRKGEWFFFSSLQP). A disordered region spans residues 308–339 (SIRPTEQKHKPTSTETSMSRKDHQVRTIDQPQ).

In Arabidopsis thaliana (Mouse-ear cress), this protein is Putative F-box protein At1g33010.